The chain runs to 490 residues: Capsid protein (490 aa).

The tract at residues 79–143 is disordered; sequence GETSEEESDS…TQPKTIPGQK (65 aa). Over residues 81–94 the composition is skewed to acidic residues; that stretch reads TSEEESDSGEEPEF. Positions 95 to 111 are enriched in basic and acidic residues; that stretch reads EQVRMDRTGGTEIPKEE. Positions 122–125 match the Nuclear localization signal motif; it reads RKRK. Residues 411 to 428 form a CCHC-type zinc finger; sequence CRCWICNIEGHYANECPN. The tract at residues 464 to 490 is disordered; the sequence is YKEEEEETSTEEDDGSSTSEDSDSESD. A compositionally biased stretch (acidic residues) spans 465–490; the sequence is KEEEEETSTEEDDGSSTSEDSDSESD.

Belongs to the caulimoviridae capsid protein family. Interacts (via nuclear localization signal) with host importin alpha.

It localises to the virion. It is found in the host nucleus. Self assembles to form an icosahedral capsid, about 50 nm in diameter, nm, composed of 420 subunits of the viral capsid protein. The capsid encapsulates the genomic dsDNA. Following virus entry into host cell, provides nuclear import of the viral genome. Virus particles do not enter the nucleus, but dock at the nuclear membrane through the interaction with host importins. The chain is Capsid protein from Arabidopsis thaliana (Mouse-ear cress).